The following is a 66-amino-acid chain: Large ribosomal subunit protein uL29 (66 aa).

It belongs to the universal ribosomal protein uL29 family.

The chain is Large ribosomal subunit protein uL29 from Petrotoga mobilis (strain DSM 10674 / SJ95).